Consider the following 90-residue polypeptide: Long neurotoxin 7 (90 aa).

Positions 1–21 are cleaved as a signal peptide; that stretch reads MKTLLLTLVLVTIMCLDLGYT. Disulfide bonds link C24–C41, C35–C62, C47–C51, C66–C77, and C78–C83.

The protein belongs to the three-finger toxin family. Long-chain subfamily. Type II alpha-neurotoxin sub-subfamily. As to expression, expressed by the venom gland.

It is found in the secreted. Its function is as follows. Binds with high affinity to muscular (alpha-1/CHRNA1) and neuronal (alpha-7/CHRNA7) nicotinic acetylcholine receptor (nAChR) and inhibits acetylcholine from binding to the receptor, thereby impairing neuromuscular and neuronal transmission. The sequence is that of Long neurotoxin 7 from Naja sputatrix (Malayan spitting cobra).